An 85-amino-acid chain; its full sequence is Splicing factor 3B subunit 5 (85 aa).

Belongs to the SF3B5 family. Component of the SF3B complex. SF3B complex associates with the splicing factor SF3A complex and a 12S RNA unit to form the U2 small nuclear ribonucleoproteins complex (U2 snRNP). Identified in the SAGA transcription regulatory histone acetylation (HAT) complex; the interaction is RNA-independent.

The protein localises to the nucleus. Functionally, involved in pre-mRNA splicing as component of spliceosome. As part of the spliceosome complex, plays a role in the regulation of spermatogonial differentiation. When associated with the SAGA transcription regulatory histone acetylation (HAT) complex, might be involved in the transcriptional activation of a subset of SAGA-regulated genes. The sequence is that of Splicing factor 3B subunit 5 from Drosophila melanogaster (Fruit fly).